Here is a 459-residue protein sequence, read N- to C-terminus: tRNA modification GTPase MnmE (459 aa).

3 residues coordinate (6S)-5-formyl-5,6,7,8-tetrahydrofolate: Arg-24, Glu-82, and Lys-122. The region spanning 219-379 (GIKVVISGAP…LRQHLYFSFK (161 aa)) is the TrmE-type G domain. GTP-binding positions include 229-234 (NSGKSS), 248-254 (TNFPGTT), and 273-276 (DTAG). Residues Ser-233 and Thr-254 each contribute to the Mg(2+) site. Lys-459 contacts (6S)-5-formyl-5,6,7,8-tetrahydrofolate.

It belongs to the TRAFAC class TrmE-Era-EngA-EngB-Septin-like GTPase superfamily. TrmE GTPase family. As to quaternary structure, homodimer. Heterotetramer of two MnmE and two MnmG subunits. The cofactor is K(+).

The protein localises to the cytoplasm. In terms of biological role, exhibits a very high intrinsic GTPase hydrolysis rate. Involved in the addition of a carboxymethylaminomethyl (cmnm) group at the wobble position (U34) of certain tRNAs, forming tRNA-cmnm(5)s(2)U34. This is tRNA modification GTPase MnmE from Buchnera aphidicola subsp. Baizongia pistaciae (strain Bp).